We begin with the raw amino-acid sequence, 543 residues long: Tubby-related protein 1 (543 aa).

The disordered stretch occupies residues 1–290 (MPLQEETLRE…RASSPPVEVG (290 aa)). Composition is skewed to basic and acidic residues over residues 46–56 (PETPDSLESKP) and 86–99 (FLRDPEAKKRDPRE). 2 stretches are compositionally biased toward acidic residues: residues 110–132 (GGEENSEEDSDDDDNDDDEEEEE) and 244–255 (KKEEEEEVEEEV). A compositionally biased stretch (basic residues) spans 267–276 (GRAKGKGKKK).

This sequence belongs to the TUB family. As to quaternary structure, homodimer. May interact with ABCF1, PSIP1, ZEB1 and HMGB2 (Potential). Interacts with F-actin. Interacts with DNM1. Interacts with TUB. Interacts with TYRO3. Retina specific. Detected in the outer plexiform layer in photoreceptor cells (at protein level).

Its subcellular location is the cytoplasm. The protein resides in the cell membrane. The protein localises to the secreted. It localises to the synapse. Functionally, required for normal development of photoreceptor synapses. Required for normal photoreceptor function and for long-term survival of photoreceptor cells. Interacts with cytoskeleton proteins and may play a role in protein transport in photoreceptor cells. Binds lipids, especially phosphatidylinositol 3-phosphate, phosphatidylinositol 4-phosphate, phosphatidylinositol 5-phosphate, phosphatidylinositol 3,4-bisphosphate, phosphatidylinositol 4,5-bisphosphate, phosphatidylinositol 3,4,5-bisphosphate, phosphatidylserine and phosphatidic acid (in vitro). Contribute to stimulation of phagocytosis of apoptotic retinal pigment epithelium (RPE) cells and macrophages. In Mus musculus (Mouse), this protein is Tubby-related protein 1 (Tulp1).